A 943-amino-acid chain; its full sequence is Isoleucine--tRNA ligase (943 aa).

Positions 58 to 68 match the 'HIGH' region motif; that stretch reads PYANGKIHIGH. An L-isoleucyl-5'-AMP-binding site is contributed by Glu567. A 'KMSKS' region motif is present at residues 608 to 612; the sequence is KMSKS. ATP is bound at residue Lys611. Zn(2+)-binding residues include Cys906, Cys909, Cys926, and Cys929.

The protein belongs to the class-I aminoacyl-tRNA synthetase family. IleS type 1 subfamily. In terms of assembly, monomer. Requires Zn(2+) as cofactor.

Its subcellular location is the cytoplasm. The enzyme catalyses tRNA(Ile) + L-isoleucine + ATP = L-isoleucyl-tRNA(Ile) + AMP + diphosphate. Functionally, catalyzes the attachment of isoleucine to tRNA(Ile). As IleRS can inadvertently accommodate and process structurally similar amino acids such as valine, to avoid such errors it has two additional distinct tRNA(Ile)-dependent editing activities. One activity is designated as 'pretransfer' editing and involves the hydrolysis of activated Val-AMP. The other activity is designated 'posttransfer' editing and involves deacylation of mischarged Val-tRNA(Ile). This chain is Isoleucine--tRNA ligase, found in Pseudomonas entomophila (strain L48).